The primary structure comprises 340 residues: Phosphate acyltransferase (340 aa).

A disordered region spans residues 285–340; it reads WRQSGRPARHRGQEPRRHRQPRFWLCHRRGRRRSPRQRNRTHPGTGQPPAGCAGAR. Residues 300-325 are compositionally biased toward basic residues; it reads RRHRQPRFWLCHRRGRRRSPRQRNRT.

It belongs to the PlsX family. As to quaternary structure, homodimer. Probably interacts with PlsY.

It is found in the cytoplasm. It carries out the reaction a fatty acyl-[ACP] + phosphate = an acyl phosphate + holo-[ACP]. It participates in lipid metabolism; phospholipid metabolism. Functionally, catalyzes the reversible formation of acyl-phosphate (acyl-PO(4)) from acyl-[acyl-carrier-protein] (acyl-ACP). This enzyme utilizes acyl-ACP as fatty acyl donor, but not acyl-CoA. In Laribacter hongkongensis (strain HLHK9), this protein is Phosphate acyltransferase.